The following is a 274-amino-acid chain: Formamidopyrimidine-DNA glycosylase (274 aa).

The active-site Schiff-base intermediate with DNA is proline 2. Glutamate 3 (proton donor) is an active-site residue. The Proton donor; for beta-elimination activity role is filled by lysine 57. Histidine 92, arginine 111, and lysine 152 together coordinate DNA. The FPG-type zinc-finger motif lies at 237–271; it reads QVYGRKGEECRECGTLIQAKVIGQRNSYFCPDCQP. Catalysis depends on arginine 261, which acts as the Proton donor; for delta-elimination activity.

The protein belongs to the FPG family. In terms of assembly, monomer. It depends on Zn(2+) as a cofactor.

The enzyme catalyses Hydrolysis of DNA containing ring-opened 7-methylguanine residues, releasing 2,6-diamino-4-hydroxy-5-(N-methyl)formamidopyrimidine.. It carries out the reaction 2'-deoxyribonucleotide-(2'-deoxyribose 5'-phosphate)-2'-deoxyribonucleotide-DNA = a 3'-end 2'-deoxyribonucleotide-(2,3-dehydro-2,3-deoxyribose 5'-phosphate)-DNA + a 5'-end 5'-phospho-2'-deoxyribonucleoside-DNA + H(+). Its function is as follows. Involved in base excision repair of DNA damaged by oxidation or by mutagenic agents. Acts as a DNA glycosylase that recognizes and removes damaged bases. Has a preference for oxidized purines, such as 7,8-dihydro-8-oxoguanine (8-oxoG). Has AP (apurinic/apyrimidinic) lyase activity and introduces nicks in the DNA strand. Cleaves the DNA backbone by beta-delta elimination to generate a single-strand break at the site of the removed base with both 3'- and 5'-phosphates. The sequence is that of Formamidopyrimidine-DNA glycosylase from Haemophilus ducreyi (strain 35000HP / ATCC 700724).